A 637-amino-acid chain; its full sequence is Chaperone protein HtpG (637 aa).

The tract at residues 1 to 338 (MTSTIDKNGA…SADLPLNISR (338 aa)) is a; substrate-binding. Residues 339 to 552 (EMIQESPILA…ESGPDRQLEK (214 aa)) form a b region. The tract at residues 553-637 (ILLGVGQLAG…LRRSSAGGGD (85 aa)) is c.

Belongs to the heat shock protein 90 family. As to quaternary structure, homodimer.

The protein resides in the cytoplasm. In terms of biological role, molecular chaperone. Has ATPase activity. The polypeptide is Chaperone protein HtpG (Nitrobacter winogradskyi (strain ATCC 25391 / DSM 10237 / CIP 104748 / NCIMB 11846 / Nb-255)).